The primary structure comprises 776 residues: Glutathione biosynthesis bifunctional protein GshAB (776 aa).

The glutamate--cysteine ligase stretch occupies residues 1–354; it reads MIKLDMTILD…QLADENENNI (354 aa). The 255-residue stretch at 521 to 775 folds into the ATP-grasp domain; that stretch reads KLVLAENNIR…IGDKILDFLF (255 aa). Residue 548-606 participates in ATP binding; it reads SLFKDKQIVVKPKSTNYGWGISIFKNKFTTEDYQEALNIAFSYDSSVIIEEFIPGDEFR. Mg(2+)-binding residues include Asp728, Glu745, and Asn747. Mn(2+) contacts are provided by Asp728, Glu745, and Asn747.

The protein in the N-terminal section; belongs to the glutamate--cysteine ligase type 1 family. Type 2 subfamily. As to quaternary structure, monomer. It depends on Mg(2+) as a cofactor. Mn(2+) serves as cofactor.

The enzyme catalyses L-cysteine + L-glutamate + ATP = gamma-L-glutamyl-L-cysteine + ADP + phosphate + H(+). It carries out the reaction gamma-L-glutamyl-L-cysteine + glycine + ATP = glutathione + ADP + phosphate + H(+). Its pathway is sulfur metabolism; glutathione biosynthesis; glutathione from L-cysteine and L-glutamate: step 1/2. The protein operates within sulfur metabolism; glutathione biosynthesis; glutathione from L-cysteine and L-glutamate: step 2/2. In terms of biological role, synthesizes glutathione from L-glutamate and L-cysteine via gamma-L-glutamyl-L-cysteine. This Listeria welshimeri serovar 6b (strain ATCC 35897 / DSM 20650 / CCUG 15529 / CIP 8149 / NCTC 11857 / SLCC 5334 / V8) protein is Glutathione biosynthesis bifunctional protein GshAB.